A 722-amino-acid chain; its full sequence is Mating-type switching protein swi2 (722 aa).

2 disordered regions span residues 1-35 and 301-342; these read MNVNKKQESIPVNTGSESISSNDNERFEQGKGVGS and SEEF…PLPS. The span at 9 to 22 shows a compositional bias: polar residues; the sequence is SIPVNTGSESISSN. The span at 302-316 shows a compositional bias: acidic residues; sequence EEFDFEPSREDEDFP. Polar residues predominate over residues 319 to 332; it reads TSDSTGQDPLSSEP.

In terms of assembly, interacts with swi5 and rhp51.

Functionally, required for normal mating-type switching. The sequence is that of Mating-type switching protein swi2 (swi2) from Schizosaccharomyces pombe (strain 972 / ATCC 24843) (Fission yeast).